Here is a 520-residue protein sequence, read N- to C-terminus: MAALEELKKKLSPLFDAEKGFSSSSSLDPNDSYLLSDGGTVNLLSRSYGVYNFNELGLQKCTSSHVDESESSETTYQCASHEMRVFGAIGSGASSVVQRAIHIPNHRILALKKINIFEREKRQQLLTEIRTLCEAPCHEGLVDFHGAFYSPDSGQISIALEYMNGGSLADILKVTKKIPEPVLSSLFHKLLQGLSYLHGVRHLVHRDIKPANLLINLKGEPKITDFGISAGLENSMAMCATFVGTVTYMSPERIRNDSYSYPADIWSLGLALFECGTGEFPYIANEGPVNLMLQILDDPSPTPPKQEFSPEFCSFIDACLQKDPDARPTADQLLSHPFITKHEKERVDLATFVQSIFDPTQRLKDLADMLTIHYYSLFDGFDDLWHHAKSLYTETSVFSFSGKHNTGSTEIFSALSDIRNTLTGDLPSEKLVHVVEKLHCKPCGSGGVIIRAVGSFIVGNQFLICGDGVQAEGLPSFKDLGFDVASRRVGRFQEQFVVESGDLIGKYFLAKQELYITNLD.

S69 carries the post-translational modification Phosphoserine. Residues 83–339 form the Protein kinase domain; sequence MRVFGAIGSG…ADQLLSHPFI (257 aa). ATP is bound by residues 89–97 and K112; that span reads IGSGASSVV. Residue D207 is the Proton acceptor of the active site. Residue S235 is modified to Phosphoserine. T241 and T245 each carry phosphothreonine. The NTF2 domain maps to 366 to 516; the sequence is LADMLTIHYY…YFLAKQELYI (151 aa).

Belongs to the protein kinase superfamily. STE Ser/Thr protein kinase family. MAP kinase kinase subfamily. Interacts with MPK1, MPK2 and MPK7. Interacts with P.syringae type III effector HopF2. Interacts with MPK14. Binds to MAPKKK17 and MAPKKK18. Binds to MAPKKK20. Phosphorylation at Ser-235 and Thr-241 by MAP kinase kinase kinases positively regulates kinase activity. Phosphorylated by MAPKKK20. As to expression, mostly expressed in leaves, and, to a lower extent, in roots, seedlings, flower buds, flowers and siliques.

The protein localises to the nucleus. The protein resides in the cytoplasm. The enzyme catalyses L-seryl-[protein] + ATP = O-phospho-L-seryl-[protein] + ADP + H(+). The catalysed reaction is L-threonyl-[protein] + ATP = O-phospho-L-threonyl-[protein] + ADP + H(+). It carries out the reaction L-tyrosyl-[protein] + ATP = O-phospho-L-tyrosyl-[protein] + ADP + H(+). Its function is as follows. MKK3-MPK6 module plays an important role in the jasmonate signal transduction pathway through the negative regulation of MYC2/JIN1 expression. Activates by phosphorylation the downstream MPK6, MPK7 and MPK8. MKK3-MPK7 module acts as a positive regulator of PR1 gene expression. MKK3-MPK8 module negatively regulates ROS accumulation through controlling expression of the RBOHD gene. Component of the abscisic acid (ABA) signaling pathway that may act as ABA signal transducer in the context of abiotic stresses. Activator of the C group MAP kinases. Activates MPK7 in response to ABA. Mitogen-activated protein kinase (MAPK) that is specifically regulated by MAPKKK20 and mediates signaling that regulates cortical microtubule functions. In Arabidopsis thaliana (Mouse-ear cress), this protein is Mitogen-activated protein kinase kinase 3.